A 178-amino-acid chain; its full sequence is Protein RICE FLOWERING LOCUS T 1 (178 aa).

Belongs to the phosphatidylethanolamine-binding protein family. Interacts with FTIP1. In terms of tissue distribution, expressed in leaf vascular tissues. Specifically expressed in the phloem including companion cells.

The protein resides in the cytoplasm. It is found in the nucleus. It localises to the endoplasmic reticulum. Probable mobile flower-promoting signal (florigen) that moves from the leaf to the shoot apical meristem (SAM) and induces flowering. Promotes the transition from vegetative growth to flowering under long day (LD) conditions. Acts upstream of MADS14 and MADS15. May also participate in the promotion of flowering under short day (SD) conditions. In Oryza sativa subsp. japonica (Rice), this protein is Protein RICE FLOWERING LOCUS T 1.